Reading from the N-terminus, the 375-residue chain is MSYYLVQSTDEDILKHAECGGAVTAFFKYLLDKKLVDGVLALKKGEDVYDGLPYLVNDSKELVETCGSLHCAPTMFGNMISKHLKDMNLAVSVKPCDAMAIVELEKRHQIDKDKLYTIGLNCGGTVPPQTAKKMIELFYDVDPEDVIKEEIDKGKFIIELKDGSEKSVKIDELEEEGYGRRTNCQRCELKVPRNSDLACGNWGTEKGWTFVEVGSEKGEELLKNAQKEGYINVKAPSEKALEIRGKIEKSMINLGKKFQKEQLDEKYPEPEKWDEYWSRCIKCYGCRDVCPICFCKECALGEDYLDKGTIPPDPIMFQGIRLSHMSFSCINCGQCEDVCPVEIPLAKIYHRAQLKIRETTGFVPGIDDSMPFLYK.

4Fe-4S ferredoxin-type domains are found at residues proline 268–proline 291 and isoleucine 320–tyrosine 349. [4Fe-4S] cluster is bound by residues cysteine 280, cysteine 283, cysteine 286, cysteine 290, cysteine 329, cysteine 332, cysteine 335, and cysteine 339.

This sequence belongs to the FrhB family. In terms of assembly, dimer of an alpha (FdhA2) and a beta (FdhB2) subunit. Requires [4Fe-4S] cluster as cofactor. The cofactor is FAD. It depends on Zn(2+) as a cofactor.

It catalyses the reaction oxidized coenzyme F420-(gamma-L-Glu)(n) + formate + 2 H(+) = reduced coenzyme F420-(gamma-L-Glu)(n) + CO2. Its function is as follows. Catalyzes the oxidation of formate to carbon dioxide, with coenzyme F420 as the electron acceptor. In vitro can also use methyl viologen as electron acceptor. The protein is F420-dependent formate dehydrogenase 2 subunit beta of Methanococcus maripaludis (strain DSM 14266 / JCM 13030 / NBRC 101832 / S2 / LL).